A 694-amino-acid chain; its full sequence is Two-component response regulator ORR25 (694 aa).

Residues 17–132 (RVLAVDDSPV…DIQNIWQHVW (116 aa)) enclose the Response regulatory domain. A 4-aspartylphosphate modification is found at Asp-68. Positions 183–242 (TLKRQRVVWTPELHRDFVIAVHELGVDRAVPRKILRMMKVDYMTRENIASHLQKYRLYLK) constitute an HTH myb-type domain. The segment at residues 213 to 238 (PRKILRMMKVDYMTRENIASHLQKYR) is a DNA-binding region (H-T-H motif). Residues 326 to 349 (VGHGGSPGNNPVFQPLQNSSNARK) are disordered. The span at 333-347 (GNNPVFQPLQNSSNA) shows a compositional bias: polar residues.

This sequence belongs to the ARR family. Type-B subfamily. Two-component system major event consists of a His-to-Asp phosphorelay between a sensor histidine kinase (HK) and a response regulator (RR). In plants, the His-to-Asp phosphorelay involves an additional intermediate named Histidine-containing phosphotransfer protein (HPt). This multistep phosphorelay consists of a His-Asp-His-Asp sequential transfer of a phosphate group between first a His and an Asp of the HK protein, followed by the transfer to a conserved His of the HPt protein and finally the transfer to an Asp in the receiver domain of the RR protein.

The protein resides in the nucleus. Transcriptional activator that binds specific DNA sequence. Functions as a response regulator involved in His-to-Asp phosphorelay signal transduction system. Phosphorylation of the Asp residue in the receiver domain activates the ability of the protein to promote the transcription of target genes. May directly activate some type-A response regulators in response to cytokinins. This chain is Two-component response regulator ORR25, found in Oryza sativa subsp. japonica (Rice).